An 86-amino-acid chain; its full sequence is Small ribosomal subunit protein bS20 (86 aa).

Residues 1–21 (MANTKSAIKAARKSLRLHDRN) form a disordered region.

Belongs to the bacterial ribosomal protein bS20 family.

Binds directly to 16S ribosomal RNA. The polypeptide is Small ribosomal subunit protein bS20 (Opitutus terrae (strain DSM 11246 / JCM 15787 / PB90-1)).